A 366-amino-acid chain; its full sequence is Mannonate dehydratase (366 aa).

Belongs to the mannonate dehydratase family. Requires Fe(2+) as cofactor. Mn(2+) serves as cofactor.

The enzyme catalyses D-mannonate = 2-dehydro-3-deoxy-D-gluconate + H2O. The protein operates within carbohydrate metabolism; pentose and glucuronate interconversion. Functionally, catalyzes the dehydration of D-mannonate. This chain is Mannonate dehydratase, found in Streptococcus suis (strain 98HAH33).